A 1134-amino-acid chain; its full sequence is Ankyrin repeat and SAM domain-containing protein 1A (1134 aa).

Gly-2 is subject to N-acetylglycine. A compositionally biased stretch (gly residues) spans 33–55 (GGGGGGGSGGGGGGSGGGGGGLG). The segment at 33–57 (GGGGGGGSGGGGGGSGGGGGGLGSS) is disordered. ANK repeat units follow at residues 79–108 (TGYT…LTNV), 112–141 (KGCY…SHTR), 148–177 (DNET…DPTM), 181–210 (KFET…NLLS), 214–243 (KKHT…DSNY), and 246–275 (EMGS…DVNI). The segment covering 305–317 (HMTGKRSTKEVDK) has biased composition (basic and acidic residues). 3 disordered regions span residues 305-338 (HMTG…KSQG), 375-422 (SMAS…EEDH), and 469-498 (VDGK…VPEQ). Thr-318 is subject to Phosphothreonine. Residues 328-337 (SMDSISQKSQ) show a composition bias toward polar residues. Residues 382 to 392 (SDQDSTNKEAE) show a composition bias toward basic and acidic residues. The residue at position 507 (Ser-507) is a Phosphoserine. The tract at residues 569–650 (LTGLPTTNSR…MGSRSESLSN (82 aa)) is disordered. The span at 572–588 (LPTTNSRSHPETLTHTA) shows a compositional bias: polar residues. A compositionally biased stretch (basic and acidic residues) spans 613-628 (PKAELKLSRSLSKSDS). Ser-620, Ser-622, Ser-624, Ser-626, Ser-628, Ser-647, Ser-661, Ser-663, Ser-666, and Ser-677 each carry phosphoserine. Residues 633–650 (CSPTEDATMGSRSESLSN) show a composition bias toward polar residues. SAM domains are found at residues 696–762 (TLEQ…LPKV) and 770–837 (NSPP…YEEP). The segment covering 856-868 (TSSPLSQNDSCTG) has biased composition (polar residues). 2 disordered regions span residues 856 to 896 (TSSP…APSR) and 1079 to 1134 (AEMI…LSTN). A Phosphoserine modification is found at Ser-887. One can recognise a PID domain in the interval 936 to 1091 (IFESCGYEAN…IETKSSKPVP (156 aa)). Residues 1123–1134 (PKPDSKRSLSTN) are compositionally biased toward basic and acidic residues.

In terms of assembly, interacts (via SAM domain) with EPHA2 (via SAM domain). Interacts with EPHA8; EPHA8 kinase activity-independent but stimulated by EPHA8 ubiquitination. Interacts (via SAM domain) with EPHA6 (via SAM domain). Phosphorylated on tyrosine residues in response to EGF and PDGF. As to expression, widely expressed (at protein level).

The protein resides in the cytoplasm. The protein localises to the cell projection. In terms of biological role, regulator of different signaling pathways. Regulates EPHA8 receptor tyrosine kinase signaling to control cell migration and neurite retraction. This chain is Ankyrin repeat and SAM domain-containing protein 1A (ANKS1A), found in Homo sapiens (Human).